The chain runs to 185 residues: Histone H1-delta (185 aa).

Disordered regions lie at residues 1-37 (MADT…PKYS) and 90-185 (RHVK…GKKK). Positions 32 to 105 (SHPKYSDMIA…GASGSFLLAE (74 aa)) constitute an H15 domain. Basic residues predominate over residues 109–185 (TPKKAAAKKA…KAAKGKGKKK (77 aa)).

This sequence belongs to the histone H1/H5 family.

It localises to the nucleus. Its subcellular location is the chromosome. Histones H1 are necessary for the condensation of nucleosome chains into higher-order structures. In Strongylocentrotus purpuratus (Purple sea urchin), this protein is Histone H1-delta.